The chain runs to 289 residues: Energy-coupling factor transporter ATP-binding protein EcfA2 (289 aa).

Residues 3-246 (IEIKDVEHRY…KDDIAALGLD (244 aa)) form the ABC transporter domain. 40 to 47 (GHTGSGKS) serves as a coordination point for ATP.

This sequence belongs to the ABC transporter superfamily. Energy-coupling factor EcfA family. As to quaternary structure, forms a stable energy-coupling factor (ECF) transporter complex composed of 2 membrane-embedded substrate-binding proteins (S component), 2 ATP-binding proteins (A component) and 2 transmembrane proteins (T component).

The protein localises to the cell membrane. ATP-binding (A) component of a common energy-coupling factor (ECF) ABC-transporter complex. Unlike classic ABC transporters this ECF transporter provides the energy necessary to transport a number of different substrates. This is Energy-coupling factor transporter ATP-binding protein EcfA2 from Bacillus licheniformis (strain ATCC 14580 / DSM 13 / JCM 2505 / CCUG 7422 / NBRC 12200 / NCIMB 9375 / NCTC 10341 / NRRL NRS-1264 / Gibson 46).